A 327-amino-acid chain; its full sequence is Probable cell division protein WhiA (327 aa).

The H-T-H motif DNA-binding region spans 275–308 (SLEELGRLADPQMTKDAVAGRIRRLLTMADKRAE).

It belongs to the WhiA family.

Its function is as follows. Involved in cell division and chromosome segregation. This chain is Probable cell division protein WhiA, found in Corynebacterium glutamicum (strain R).